Reading from the N-terminus, the 170-residue chain is Probable inosine/xanthosine triphosphatase (170 aa).

Glutamate 31 serves as a coordination point for Mg(2+).

It belongs to the YjjX NTPase family. As to quaternary structure, homodimer. It depends on Mg(2+) as a cofactor. Mn(2+) serves as cofactor.

It carries out the reaction XTP + H2O = XDP + phosphate + H(+). The catalysed reaction is ITP + H2O = IDP + phosphate + H(+). Its function is as follows. Phosphatase that hydrolyzes non-canonical purine nucleotides such as XTP and ITP to their respective diphosphate derivatives. Probably excludes non-canonical purines from DNA/RNA precursor pool, thus preventing their incorporation into DNA/RNA and avoiding chromosomal lesions. The chain is Probable inosine/xanthosine triphosphatase from Oceanobacillus iheyensis (strain DSM 14371 / CIP 107618 / JCM 11309 / KCTC 3954 / HTE831).